The primary structure comprises 228 residues: PKHD-type hydroxylase XCV3086 (228 aa).

The Fe2OG dioxygenase domain occupies 78 to 180 (RIYPPLFNRY…RVACFFWTQS (103 aa)). 3 residues coordinate Fe cation: H96, D98, and H161. Position 171 (R171) interacts with 2-oxoglutarate.

Fe(2+) is required as a cofactor. Requires L-ascorbate as cofactor.

The polypeptide is PKHD-type hydroxylase XCV3086 (Xanthomonas euvesicatoria pv. vesicatoria (strain 85-10) (Xanthomonas campestris pv. vesicatoria)).